The following is a 201-amino-acid chain: ATP-dependent Clp protease proteolytic subunit (201 aa).

Residue Ser101 is the Nucleophile of the active site. His126 is an active-site residue.

Belongs to the peptidase S14 family. Component of the chloroplastic Clp protease core complex.

It is found in the plastid. Its subcellular location is the chloroplast stroma. It catalyses the reaction Hydrolysis of proteins to small peptides in the presence of ATP and magnesium. alpha-casein is the usual test substrate. In the absence of ATP, only oligopeptides shorter than five residues are hydrolyzed (such as succinyl-Leu-Tyr-|-NHMec, and Leu-Tyr-Leu-|-Tyr-Trp, in which cleavage of the -Tyr-|-Leu- and -Tyr-|-Trp bonds also occurs).. In terms of biological role, cleaves peptides in various proteins in a process that requires ATP hydrolysis. Has a chymotrypsin-like activity. Plays a major role in the degradation of misfolded proteins. The sequence is that of ATP-dependent Clp protease proteolytic subunit from Staurastrum punctulatum (Green alga).